The primary structure comprises 83 residues: Translation initiation factor IF-1 (83 aa).

One can recognise an S1-like domain in the interval Met-1–Ala-72.

The protein belongs to the IF-1 family. As to quaternary structure, component of the 30S ribosomal translation pre-initiation complex which assembles on the 30S ribosome in the order IF-2 and IF-3, IF-1 and N-formylmethionyl-tRNA(fMet); mRNA recruitment can occur at any time during PIC assembly.

It is found in the cytoplasm. Functionally, one of the essential components for the initiation of protein synthesis. Stabilizes the binding of IF-2 and IF-3 on the 30S subunit to which N-formylmethionyl-tRNA(fMet) subsequently binds. Helps modulate mRNA selection, yielding the 30S pre-initiation complex (PIC). Upon addition of the 50S ribosomal subunit IF-1, IF-2 and IF-3 are released leaving the mature 70S translation initiation complex. The polypeptide is Translation initiation factor IF-1 (Coxiella burnetii (strain Dugway 5J108-111)).